The sequence spans 462 residues: Zinc finger CCCH domain-containing protein 8 (462 aa).

6 consecutive C3H1-type zinc fingers follow at residues 105–133 (RPGEKDCAFYMMTRTCKFGGSCKFDHPQW), 156–184 (QEGEPDCPFFMKTGKCKFGSKCKFNHPKE), 209–237 (RPSEPLCSFYAKTGKCKFRAMCKFNHPKD), 288–316 (RPGEVDCPFYMKMGSCKFGSTCRFNHPDR), 367–395 (RPGATVCDFYMKTGFCKFADRCKFHHPID), and 422–450 (REDAVVCAFYMKTGVCKFGMQCKFDHPPP).

The polypeptide is Zinc finger CCCH domain-containing protein 8 (Oryza sativa subsp. japonica (Rice)).